A 494-amino-acid chain; its full sequence is Cytochrome c-552 (494 aa).

An N-terminal signal peptide occupies residues 1–31 (MEKKLKSWQGWLLFGGTMVVVFVLGMIAASV). A heme c-binding site is contributed by histidine 116. Heme-binding residues include cysteine 144, cysteine 147, and lysine 148. 6 residues coordinate heme c: cysteine 182, cysteine 185, histidine 186, cysteine 224, cysteine 227, and histidine 228. Ca(2+)-binding residues include glutamate 230, tyrosine 231, lysine 276, and glutamine 278. Tyrosine 231 contacts substrate. Substrate is bound at residue histidine 279. Heme c is bound by residues histidine 290, cysteine 297, cysteine 300, histidine 301, histidine 315, cysteine 328, cysteine 331, histidine 332, and histidine 407.

It belongs to the cytochrome c-552 family. Ca(2+) is required as a cofactor. Heme c serves as cofactor.

The protein resides in the periplasm. It carries out the reaction 6 Fe(III)-[cytochrome c] + NH4(+) + 2 H2O = 6 Fe(II)-[cytochrome c] + nitrite + 8 H(+). Its pathway is nitrogen metabolism; nitrate reduction (assimilation). In terms of biological role, catalyzes the reduction of nitrite to ammonia, consuming six electrons in the process. This chain is Cytochrome c-552, found in Parabacteroides distasonis (strain ATCC 8503 / DSM 20701 / CIP 104284 / JCM 5825 / NCTC 11152).